The following is a 96-amino-acid chain: Small ribosomal subunit protein bS6 (96 aa).

It belongs to the bacterial ribosomal protein bS6 family.

Functionally, binds together with bS18 to 16S ribosomal RNA. In Streptococcus gordonii (strain Challis / ATCC 35105 / BCRC 15272 / CH1 / DL1 / V288), this protein is Small ribosomal subunit protein bS6.